Reading from the N-terminus, the 218-residue chain is UPF0502 protein Geob_1184 (218 aa).

This sequence belongs to the UPF0502 family.

This is UPF0502 protein Geob_1184 from Geotalea daltonii (strain DSM 22248 / JCM 15807 / FRC-32) (Geobacter daltonii).